The following is a 619-amino-acid chain: Chaperone protein HscA homolog (619 aa).

This sequence belongs to the heat shock protein 70 family.

Functionally, chaperone involved in the maturation of iron-sulfur cluster-containing proteins. Has a low intrinsic ATPase activity which is markedly stimulated by HscB. The sequence is that of Chaperone protein HscA homolog from Shewanella frigidimarina (strain NCIMB 400).